We begin with the raw amino-acid sequence, 1111 residues long: uncharacterized protein (1111 aa).

Residues 1–31 (MIRKLMKIPPFFTALFASAMFTLSVSQGVLA) form the signal peptide. The next 11 helical transmembrane spans lie at 490–510 (LPYL…IFKF), 538–558 (LALL…LAVC), 572–592 (FWHW…WISL), 620–640 (IIVV…TDAG), 644–664 (DVLG…IIAP), 694–714 (IPVG…LNLI), 797–817 (FIWT…VTVV), 840–860 (SITL…YVLV), 885–905 (ITTL…FATL), 922–942 (GLGF…ILLF), and 1003–1023 (LVIS…QLLL).

Belongs to the MscS (TC 1.A.23) family.

The protein resides in the cell membrane. This is an uncharacterized protein from Haemophilus influenzae (strain ATCC 51907 / DSM 11121 / KW20 / Rd).